Reading from the N-terminus, the 160-residue chain is Troponin C, isoform 2 (160 aa).

EF-hand domains are found at residues 15 to 50, 51 to 86, 92 to 127, and 128 to 160; these read DQIE…MGQA, FEER…FVVN, GLEE…LDDN, and VSEE…MSGE. Asp-64, Asp-66, Ser-68, Glu-70, and Glu-75 together coordinate Ca(2+). Ca(2+) is bound by residues Asp-141, Asp-143, Ser-145, Thr-147, and Glu-152.

Belongs to the troponin C family. As to expression, pharyngeal muscle.

The polypeptide is Troponin C, isoform 2 (tnc-2) (Caenorhabditis elegans).